The chain runs to 226 residues: NADH-ubiquinone oxidoreductase chain 6 (226 aa).

5 helical membrane-spanning segments follow: residues 2–22 (STLGLLLILLGIIITCTFVIL), 28–48 (IYSILNLIVIYGCYASILLTV), 56–76 (IYILVNVGAIAVLFLFIVMMI), 90–110 (YNIYMFVGFIGLIGIMGILIT), and 169–189 (IWFIMACIILLIGMVGVIYIT).

The protein belongs to the complex I subunit 6 family.

It localises to the mitochondrion membrane. It carries out the reaction a ubiquinone + NADH + 5 H(+)(in) = a ubiquinol + NAD(+) + 4 H(+)(out). Its function is as follows. Core subunit of the mitochondrial membrane respiratory chain NADH dehydrogenase (Complex I) that is believed to belong to the minimal assembly required for catalysis. Complex I functions in the transfer of electrons from NADH to the respiratory chain. The immediate electron acceptor for the enzyme is believed to be ubiquinone. This chain is NADH-ubiquinone oxidoreductase chain 6 (nad6), found in Dictyostelium citrinum (Slime mold).